Consider the following 94-residue polypeptide: MASVGECPAPVPVKDKKLLEVKLGELPSWILMRDFSPSGIFGAFQRGYYRYYNKYINVKKGSISGITMVLACYVLFSYSFSYKHLKHERLRKYH.

Ala2 carries the post-translational modification N-acetylalanine. Ser3 bears the Phosphoserine mark. Position 22 is an N6-acetyllysine (Lys22). Residues 68 to 85 (MVLACYVLFSYSFSYKHL) traverse the membrane as a helical segment.

This sequence belongs to the ATPase F chain family. In terms of assembly, component of the ATP synthase complex composed at least of ATP5F1A/subunit alpha, ATP5F1B/subunit beta, ATP5MC1/subunit c (homooctomer), MT-ATP6/subunit a, MT-ATP8/subunit 8, ATP5ME/subunit e, ATP5MF/subunit f, ATP5MG/subunit g, ATP5MK/subunit k, ATP5MJ/subunit j, ATP5F1C/subunit gamma, ATP5F1D/subunit delta, ATP5F1E/subunit epsilon, ATP5PF/subunit F6, ATP5PB/subunit b, ATP5PD/subunit d, ATP5PO/subunit OSCP. ATP synthase complex consists of a soluble F(1) head domain (subunits alpha(3) and beta(3)) - the catalytic core - and a membrane F(0) domain - the membrane proton channel (subunits c, a, 8, e, f, g, k and j). These two domains are linked by a central stalk (subunits gamma, delta, and epsilon) rotating inside the F1 region and a stationary peripheral stalk (subunits F6, b, d, and OSCP).

It localises to the mitochondrion. The protein localises to the mitochondrion inner membrane. Subunit f, of the mitochondrial membrane ATP synthase complex (F(1)F(0) ATP synthase or Complex V) that produces ATP from ADP in the presence of a proton gradient across the membrane which is generated by electron transport complexes of the respiratory chain. ATP synthase complex consist of a soluble F(1) head domain - the catalytic core - and a membrane F(1) domain - the membrane proton channel. These two domains are linked by a central stalk rotating inside the F(1) region and a stationary peripheral stalk. During catalysis, ATP synthesis in the catalytic domain of F(1) is coupled via a rotary mechanism of the central stalk subunits to proton translocation. In vivo, can only synthesize ATP although its ATP hydrolase activity can be activated artificially in vitro. Part of the complex F(0) domain. This chain is ATP synthase F(0) complex subunit f, mitochondrial, found in Homo sapiens (Human).